Here is a 150-residue protein sequence, read N- to C-terminus: MNKTSVPSPDSIDRQWFLVDAENQTLGRLATEVASVLRGKTKPNFTPHLDTGDFVIVVNAEKIKVTGKKSDQKLYRRHSGRPGGMKVETFKALQSRIPERIVEKAIKGMLPHTRLGRQLFTKLKVYKGSDHPHSAQEPKILSLNSESVTK.

Residues 128-150 (GSDHPHSAQEPKILSLNSESVTK) are disordered.

The protein belongs to the universal ribosomal protein uL13 family. In terms of assembly, part of the 50S ribosomal subunit.

In terms of biological role, this protein is one of the early assembly proteins of the 50S ribosomal subunit, although it is not seen to bind rRNA by itself. It is important during the early stages of 50S assembly. The chain is Large ribosomal subunit protein uL13 from Prochlorococcus marinus (strain NATL1A).